The chain runs to 188 residues: Phospholipase A2 inhibitor 31 kDa subunit (188 aa).

Cystine bridges form between Cys-3–Cys-27, Cys-6–Cys-13, Cys-20–Cys-48, Cys-54–Cys-75, Cys-76–Cys-81, Cys-99–Cys-124, Cys-117–Cys-146, and Cys-150–Cys-172. N-linked (GlcNAc...) asparagine glycosylation occurs at Asn-157.

Belongs to the CNF-like-inhibitor family. Heterodimer with phospholipase A2 inhibitor 25 kDa. N-glycosylated. In terms of tissue distribution, expressed by the liver.

The protein resides in the secreted. Inhibits the enzymatic activity of phospholipase A2. This is Phospholipase A2 inhibitor 31 kDa subunit from Naja kaouthia (Monocled cobra).